Consider the following 277-residue polypeptide: Transcription factor HES-4-B (277 aa).

Residues 1-44 (MPADSMEKPTASPIAGAPANSAQTPDKPKSASEHRKSSKPIMEK) form a disordered region. The segment covering 26-35 (DKPKSASEHR) has biased composition (basic and acidic residues). In terms of domain architecture, bHLH spans 34–91 (HRKSSKPIMEKRRRARINESLGQLKTLILDALKKDSSRHSKLEKADILEMTVKHLRNL). The Orange domain maps to 110–143 (YRAGFNECMNEVTRFLSTCEGVNTEVRTRLLGHL). The tract at residues 258–277 (VSPLGGSTRADSAESVWRPW) is disordered. Positions 274–277 (WRPW) match the WRPW motif motif.

Transcription repression requires formation of a complex with a corepressor protein of the Groucho/TLE family. Interacts with the bHLH protein hes6; this interaction may inhibit the transcriptional repressor activity. Binds DNA in the form of a heterodimer with the bHLH protein hey1/hrt1. Interacts (via Orange domain) with id3 (via HLH domain). Dynamically expressed in the borders of several tissue territories. Expressed in the pre-placodal ectoderm (PPE) from gastrula stage. During gastrulation, expressed in the deep layer of the dorsal lip, the Spemann organizer and three distinct regions in the prospective neuroectoderm: neural plate border, presumptive floor plate/notoplate and anterior neural plate. At later stages, expression is localized to the anterior of the prechordal plate, the presomitic mesoderm, neural tube, neural crest derivatives and several tissues of the central nervous system, with expression in the developing floor plate continues to at least the tadpole stage. From the early tailbud stage, expressed in the dorsoanterior region of the developing pronephros. During early tailbud stages, broadly expressed within the pronephric mesoderm. and in the sensorial layer of the ectoderm covering the pronephros anlagen. During late tailbud to early tadpole stages, expressed in the ventral region of the pronephros. Expression remains in the proximal and distal tubules at late tadpole stages (stage 35).

It localises to the nucleus. Its function is as follows. Transcriptional repressor. Binds DNA on N-box motifs: 5'-CACNAG-3'. Promotes floor plate development and prechordal plate development. Required for lens development as early as the stage of lens field formation, partly through regulation of gene expression of the cell cycle inhibitor cdknx/p27(xic1). Required for formation of the neural crest downstream of multiple signaling pathways, and acts at the neural plate border via both DNA-binding dependent and independent mechanisms; acts in a DNA-binding dependent manner to repress pro-apoptotic and neural crest differentiation genes, including id3, delta1, and cdknx/p27(xic1), and thus promote the cell survival of neural plate border cells and maintain them in an undifferentiated state. Represses transcription of id3, at least in part through the repression of bmp4. On the other hand, acts in a DNA-independent manner separate from the transcriptional repressor function, to stimulate cell proliferation and promote neural crest formation. Via this DNA-independent route, acts in neurulae upstream of stat3 to transiently up-regulate the notch ligand dll1/delta1, which in turn up-regulates id3 expression. Then interacts directly with id3, which blocks the transcriptional repressor function of hes4-B/hairy2b to allow the progression of neural crest progenitors through specification and differentiation. Also acts via repressor-dependent and repressor-independent mechanisms in early gastrulae to establish the prospective anterior prechordal mesoderm identity in the Spemann organizer; induces specific genes independently from direct transcriptional regulation, and represses the genes specific for neighboring tissues through direct transcriptional repression. Modulates lateral inhibition during notch signaling and regulates the cell context dependent effects of notch (which can have inhibitory, permissive or enhancing roles in muscle or neural differentiation). Inhibits myogenesis. The protein is Transcription factor HES-4-B (hes4-b) of Xenopus laevis (African clawed frog).